The chain runs to 524 residues: Probable cytosol aminopeptidase (524 aa).

Lys288 and Asp293 together coordinate Mn(2+). Residue Lys300 is part of the active site. Asp311, Asp370, and Glu372 together coordinate Mn(2+). Arg374 is a catalytic residue.

The protein belongs to the peptidase M17 family. The cofactor is Mn(2+).

The protein localises to the cytoplasm. The catalysed reaction is Release of an N-terminal amino acid, Xaa-|-Yaa-, in which Xaa is preferably Leu, but may be other amino acids including Pro although not Arg or Lys, and Yaa may be Pro. Amino acid amides and methyl esters are also readily hydrolyzed, but rates on arylamides are exceedingly low.. The enzyme catalyses Release of an N-terminal amino acid, preferentially leucine, but not glutamic or aspartic acids.. Functionally, presumably involved in the processing and regular turnover of intracellular proteins. Catalyzes the removal of unsubstituted N-terminal amino acids from various peptides. The polypeptide is Probable cytosol aminopeptidase (pepA) (Mycobacterium leprae (strain TN)).